The sequence spans 438 residues: Coenzyme A disulfide reductase (438 aa).

8-33 provides a ligand contact to FAD; that stretch reads GAVAGGATCASQIRRLDKESDIIIFE. Thr15, Gln19, Arg22, Ser39, and Asn42 together coordinate substrate. Catalysis depends on Cys43, which acts as the Nucleophile. Cys43 serves as the catalytic Redox-active. Substrate is bound at residue Lys71. 151 to 166 is a binding site for NADP(+); the sequence is VLVVGAGYVSLEVLEN. 267-277 contacts FAD; the sequence is TNVPNIYAIGD. Residue His299 participates in substrate binding. Tyr419 is an FAD binding site. A substrate-binding site is contributed by Lys427.

It belongs to the class-III pyridine nucleotide-disulfide oxidoreductase family. In terms of assembly, homodimer. FAD is required as a cofactor.

The catalysed reaction is NADP(+) + 2 CoA = CoA-disulfide + NADPH + H(+). In terms of biological role, catalyzes specifically the NADPH-dependent reduction of coenzyme A disulfide. This Staphylococcus aureus (strain USA300) protein is Coenzyme A disulfide reductase.